The sequence spans 619 residues: Mitogen-activated protein kinase kinase kinase 2 (619 aa).

Disordered stretches follow at residues 25–44, 126–168, 201–245, and 289–355; these read LSLQ…QNDV, QATN…PPPG, LDPL…DNHQ, and RTQG…APTN. S26 is modified (phosphoserine). A PB1 domain is found at 43-122; sequence DVRVKFEHRG…KSLKILLVVN (80 aa). Polar residues predominate over residues 126 to 143; that stretch reads QATNLEPSPSPEDLNNTP. Residues S153 and S164 each carry the phosphoserine modification. Residues 203–219 show a composition bias toward low complexity; that stretch reads PLSLSSPENSGSGSCPS. Phosphoserine occurs at positions 239, 297, 311, 331, 344, and 349. The segment covering 290–299 has biased composition (polar residues); sequence TQGTSFRSPV. Residues 300-315 are compositionally biased toward low complexity; it reads SFSPTDHSLSTSSGSS. Residues 322 to 332 show a composition bias toward basic and acidic residues; the sequence is DDSRIRRRGSD. A compositionally biased stretch (polar residues) spans 336-346; the sequence is PTLTVTDISPP. The Protein kinase domain occupies 356-616; that stretch reads WRLGKLLGQG…AEELLRHMFV (261 aa). Residues 362–370 and K385 each bind ATP; that span reads LGQGAFGRV. Catalysis depends on D483, which acts as the Proton acceptor.

The protein belongs to the protein kinase superfamily. STE Ser/Thr protein kinase family. MAP kinase kinase kinase subfamily. In terms of assembly, self-associates. Binds both upstream activators and downstream substrates in multimolecular complexes. Interacts (via the kinase catalytic domain) with STK38. Interacts with XIAP/BIRC4. It depends on Mg(2+) as a cofactor. Ubiquitination by XIAP/BIRC4 does not lead to proteasomal degradation. Post-translationally, autophosphorylated.

It is found in the cytoplasm. The protein localises to the nucleus. It carries out the reaction L-seryl-[protein] + ATP = O-phospho-L-seryl-[protein] + ADP + H(+). The catalysed reaction is L-threonyl-[protein] + ATP = O-phospho-L-threonyl-[protein] + ADP + H(+). With respect to regulation, activated by phosphorylation on Thr-524. Interacts with PKN2; the interaction activates PKN2 kinase activity in a MAP3K2-independent kinase activity. Component of a protein kinase signal transduction cascade. Regulates the JNK and ERK5 pathways by phosphorylating and activating MAP2K5 and MAP2K7. Plays a role in caveolae kiss-and-run dynamics. The chain is Mitogen-activated protein kinase kinase kinase 2 (Map3k2) from Mus musculus (Mouse).